A 177-amino-acid polypeptide reads, in one-letter code: Large ribosomal subunit protein uL6 (177 aa).

This sequence belongs to the universal ribosomal protein uL6 family. As to quaternary structure, part of the 50S ribosomal subunit.

Its function is as follows. This protein binds to the 23S rRNA, and is important in its secondary structure. It is located near the subunit interface in the base of the L7/L12 stalk, and near the tRNA binding site of the peptidyltransferase center. This Methanosarcina barkeri (strain Fusaro / DSM 804) protein is Large ribosomal subunit protein uL6.